Reading from the N-terminus, the 300-residue chain is MRKYTHYHIPVMVREVIEYLKPEDEKIILDCTVGEGGHARAILEHCPGCKLIGIDVDSEVLQIAEKKLKDFSDRVSLFKASYRDADFLLKTLEIEKVDGILLDLGVSTYQLKGENRGFTFEREEPLDMRMDLESEITAQKVLNELSEEELARIIFEYGEEKRYARRIARKIVENRPLNTTLDLVKAVSEALPSHEIRRRKRHFATRTFQAIRIYVNRELENLREFLLNKAEKLLRVGGRIVVISFHSLEDRIVKEAFRNSRKLRILTEKPVRPSEEEVRENPRSRSARLRAAELVEEGGD.

S-adenosyl-L-methionine is bound by residues 36–38 (GGH), aspartate 55, leucine 89, aspartate 103, and glutamine 110.

It belongs to the methyltransferase superfamily. RsmH family.

Its subcellular location is the cytoplasm. The catalysed reaction is cytidine(1402) in 16S rRNA + S-adenosyl-L-methionine = N(4)-methylcytidine(1402) in 16S rRNA + S-adenosyl-L-homocysteine + H(+). Specifically methylates the N4 position of cytidine in position 1402 (C1402) of 16S rRNA. This Thermotoga neapolitana (strain ATCC 49049 / DSM 4359 / NBRC 107923 / NS-E) protein is Ribosomal RNA small subunit methyltransferase H.